A 2527-amino-acid chain; its full sequence is Leucine-rich repeat serine/threonine-protein kinase 2 (2527 aa).

A required for RAB29-mediated activation region spans residues 1 to 969 (MASGSCQGCE…RSSKLQSHMR (969 aa)). Residues 319 to 348 (LTETIFLNQDLEEKNENQENDDEGEEDKLF) adopt a coiled-coil conformation. Residues Ser-910, Ser-935, Ser-955, and Ser-973 each carry the phosphoserine modification. 13 LRR repeats span residues 983–1004 (YITS…SQKC), 1012–1033 (HLEK…LCET), 1036–1057 (SLTH…LLKM), 1059–1080 (CIAN…DPTV), 1084–1105 (TLKQ…LTDV), 1108–1129 (KLEQ…LRLK), 1130–1150 (ELKI…NFLE), 1156–1171 (ESFS…MPFL), 1174–1196 (SMTI…LNLP), 1197–1218 (HLRS…AHWK), 1221–1245 (NLRE…YLWS), 1246–1267 (RVEK…IGCL), and 1269–1291 (NLTS…MGKL). At Ser-1292 the chain carries Phosphoserine; by autocatalysis. Residues 1328–1511 (KAVPYNRMKL…KTIINESLNF (184 aa)) enclose the Roc domain. Residue 1341-1348 (GNTGSGKT) participates in GTP binding. Ser-1444 carries the post-translational modification Phosphoserine. The region spanning 1546-1740 (PVIDRKRLLQ…RMYWRQGIYL (195 aa)) is the COR domain. Residues 1879 to 2138 (QAPEFLLGDG…FDILNSAELV (260 aa)) enclose the Protein kinase domain. ATP contacts are provided by Leu-1885, Asp-1887, Gly-1888, Gly-1891, Val-1893, Ala-1904, Lys-1906, Met-1947, Glu-1948, Ala-1950, Ser-1954, and Arg-1957. The active-site Proton acceptor is Asp-1994. His-1998, Leu-2001, Ala-2016, and Asp-2017 together coordinate ATP. GTP is bound at residue 2098–2121 (EYGCAPWPMVEKLIKQCLKENPQE). WD repeat units lie at residues 2139–2183 (CLTR…SFLD), 2188–2228 (GYTS…LVIN), 2233–2276 (KKRH…AIFE), 2281–2327 (KLKG…FSFS), 2333–2377 (QKLI…EVWD), 2402–2438 (KESK…LLLD), and 2443–2497 (RLIR…TVWD). 2295–2298 (NVST) contributes to the GTP binding site.

The protein belongs to the protein kinase superfamily. TKL Ser/Thr protein kinase family. As to quaternary structure, homodimer. Homotetramer; when activated by GTP-bound RAB29. Interacts with PRKN, PRDX3, and TPCN2. Interacts with VPS35. Interacts (via N-terminus) with RAB29; this interaction is direct and stimulates kinase activity. Interacts (via ROC domain) with SEC16A. Interacts with APP; interaction promotes phosphorylation of 'Thr-743' of APP. Interacts with MAPT. Interacts with RAB8A, RAB10, and RAB12. Interacts (via N-terminus) with RAB32. Interacts with YWHAG; this interaction is dependent on phosphorylation of Ser-910 and either Ser-935 or Ser-1444. Interacts with SFN; this interaction is dependent on phosphorylation of Ser-910 and/or Ser-935. The cofactor is Mg(2+). Post-translationally, autophosphorylated at Ser-1292; autophosphorylation is stimulated by RAB29. Phosphorylation of Ser-910 and either Ser-935 or Ser-1444 facilitates interaction with YWHAG. Phosphorylation of Ser-910 and/or Ser-935 facilitates interaction with SFN. In terms of processing, ubiquitinated by TRIM1; undergoes 'Lys-48'-linked polyubiquitination leading to proteasomal degradation. As to expression, expressed in pyramidal neurons in all cortical laminae of the visual cortex, in neurons of the substantia nigra pars compacta and caudate putamen (at protein level). Expressed in neutrophils (at protein level). Expressed in the brain. Expressed throughout the adult brain, but at a lower level than in heart and liver. Also expressed in placenta, lung, skeletal muscle, kidney and pancreas. In the brain, expressed in the cerebellum, cerebral cortex, medulla, spinal cord occipital pole, frontal lobe, temporal lobe and putamen. Expression is particularly high in brain dopaminoceptive areas.

Its subcellular location is the cytoplasmic vesicle. It localises to the perikaryon. The protein localises to the golgi apparatus membrane. It is found in the cell projection. The protein resides in the axon. Its subcellular location is the dendrite. It localises to the endoplasmic reticulum membrane. The protein localises to the secretory vesicle. It is found in the synaptic vesicle membrane. The protein resides in the endosome. Its subcellular location is the lysosome. It localises to the mitochondrion outer membrane. The protein localises to the cytoplasm. It is found in the cytoskeleton. The protein resides in the phagosome. The catalysed reaction is L-threonyl-[protein] + ATP = O-phospho-L-threonyl-[protein] + ADP + H(+). The enzyme catalyses L-seryl-[protein] + ATP = O-phospho-L-seryl-[protein] + ADP + H(+). It catalyses the reaction GTP + H2O = GDP + phosphate + H(+). With respect to regulation, kinase activity is regulated by the GTPase activity of the ROC domain. GTP-bound LRRK2 kinase activity is stimulated by RAB29. Phosphorylation of RAB10 'Thr-73' is stimulated by RAB29 and RAB32. Inhibited by small molecule inhibitor MLi-2. Its function is as follows. Serine/threonine-protein kinase which phosphorylates a broad range of proteins involved in multiple processes such as neuronal plasticity, innate immunity, autophagy, and vesicle trafficking. Is a key regulator of RAB GTPases by regulating the GTP/GDP exchange and interaction partners of RABs through phosphorylation. Phosphorylates RAB3A, RAB3B, RAB3C, RAB3D, RAB5A, RAB5B, RAB5C, RAB8A, RAB8B, RAB10, RAB12, RAB29, RAB35, and RAB43. Regulates the RAB3IP-catalyzed GDP/GTP exchange for RAB8A through the phosphorylation of 'Thr-72' on RAB8A. Inhibits the interaction between RAB8A and GDI1 and/or GDI2 by phosphorylating 'Thr-72' on RAB8A. Regulates primary ciliogenesis through phosphorylation of RAB8A and RAB10, which promotes SHH signaling in the brain. Together with RAB29, plays a role in the retrograde trafficking pathway for recycling proteins, such as mannose-6-phosphate receptor (M6PR), between lysosomes and the Golgi apparatus in a retromer-dependent manner. Regulates neuronal process morphology in the intact central nervous system (CNS). Plays a role in synaptic vesicle trafficking. Plays an important role in recruiting SEC16A to endoplasmic reticulum exit sites (ERES) and in regulating ER to Golgi vesicle-mediated transport and ERES organization. Positively regulates autophagy through a calcium-dependent activation of the CaMKK/AMPK signaling pathway. The process involves activation of nicotinic acid adenine dinucleotide phosphate (NAADP) receptors, increase in lysosomal pH, and calcium release from lysosomes. Phosphorylates PRDX3. By phosphorylating APP on 'Thr-743', which promotes the production and the nuclear translocation of the APP intracellular domain (AICD), regulates dopaminergic neuron apoptosis. Acts as a positive regulator of innate immunity by mediating phosphorylation of RIPK2 downstream of NOD1 and NOD2, thereby enhancing RIPK2 activation. Independent of its kinase activity, inhibits the proteasomal degradation of MAPT, thus promoting MAPT oligomerization and secretion. In addition, has GTPase activity via its Roc domain which regulates LRRK2 kinase activity. Recruited by RAB29/RAB7L1 to overloaded lysosomes where it phosphorylates and stabilizes RAB8A and RAB10 which promote lysosomal content release and suppress lysosomal enlargement through the EHBP1 and EHBP1L1 effector proteins. This chain is Leucine-rich repeat serine/threonine-protein kinase 2 (LRRK2), found in Homo sapiens (Human).